Here is a 173-residue protein sequence, read N- to C-terminus: Large ribosomal subunit protein uL10 (173 aa).

Belongs to the universal ribosomal protein uL10 family. Part of the ribosomal stalk of the 50S ribosomal subunit. The N-terminus interacts with L11 and the large rRNA to form the base of the stalk. The C-terminus forms an elongated spine to which L12 dimers bind in a sequential fashion forming a multimeric L10(L12)X complex.

In terms of biological role, forms part of the ribosomal stalk, playing a central role in the interaction of the ribosome with GTP-bound translation factors. The chain is Large ribosomal subunit protein uL10 from Cupriavidus pinatubonensis (strain JMP 134 / LMG 1197) (Cupriavidus necator (strain JMP 134)).